A 382-amino-acid polypeptide reads, in one-letter code: Cell division protein FtsZ (382 aa).

GTP contacts are provided by residues 21 to 25 (GGGSN), 108 to 110 (GTG), E139, R143, and D187. A disordered region spans residues 322-382 (RAQQQSNFNR…FLRNRRRKSR (61 aa)). Basic and acidic residues predominate over residues 340-352 (KSKEKEAEKKEPR).

It belongs to the FtsZ family. Homodimer. Polymerizes to form a dynamic ring structure in a strictly GTP-dependent manner. Interacts directly with several other division proteins.

The protein localises to the cytoplasm. Its function is as follows. Essential cell division protein that forms a contractile ring structure (Z ring) at the future cell division site. The regulation of the ring assembly controls the timing and the location of cell division. One of the functions of the FtsZ ring is to recruit other cell division proteins to the septum to produce a new cell wall between the dividing cells. Binds GTP and shows GTPase activity. This Halalkalibacterium halodurans (strain ATCC BAA-125 / DSM 18197 / FERM 7344 / JCM 9153 / C-125) (Bacillus halodurans) protein is Cell division protein FtsZ.